Reading from the N-terminus, the 101-residue chain is Integration host factor subunit alpha (101 aa).

It belongs to the bacterial histone-like protein family. As to quaternary structure, heterodimer of an alpha and a beta chain.

Its function is as follows. This protein is one of the two subunits of integration host factor, a specific DNA-binding protein that functions in genetic recombination as well as in transcriptional and translational control. The polypeptide is Integration host factor subunit alpha (Halorhodospira halophila (strain DSM 244 / SL1) (Ectothiorhodospira halophila (strain DSM 244 / SL1))).